The following is a 396-amino-acid chain: L-lactate dehydrogenase (396 aa).

The FMN hydroxy acid dehydrogenase domain occupies 1–380 (MIISAASDYR…SGDSLVQELG (380 aa)). Tyr-24 is a binding site for substrate. Positions 106 and 127 each coordinate FMN. Tyr-129 is a binding site for substrate. Thr-155 contributes to the FMN binding site. Position 164 (Arg-164) interacts with substrate. Lys-251 serves as a coordination point for FMN. The active-site Proton acceptor is His-275. Arg-278 serves as a coordination point for substrate. 306–330 (DSGIRNGLDVVRMIALGADTVLLGR) contacts FMN.

Belongs to the FMN-dependent alpha-hydroxy acid dehydrogenase family. FMN serves as cofactor.

It localises to the cell inner membrane. It carries out the reaction (S)-lactate + A = pyruvate + AH2. Functionally, catalyzes the conversion of L-lactate to pyruvate. Is coupled to the respiratory chain. In Salmonella enteritidis PT4 (strain P125109), this protein is L-lactate dehydrogenase.